The sequence spans 89 residues: Prostaglandin E2 receptor EP3 subtype (89 aa).

Residues 1 to 18 traverse the membrane as a helical segment; it reads GVWLAVLAFALLPVLGVG. Residues 19–48 are Extracellular-facing; that stretch reads QYTIQWPGTWCFISTGPGGNGTNSRQNWGN. Residue Asn-38 is glycosylated (N-linked (GlcNAc...) asparagine). Residues 49–74 form a helical membrane-spanning segment; that stretch reads VFFASDFAILGLSALVVTFACNLATI. The Cytoplasmic portion of the chain corresponds to 75–89; that stretch reads KALVSRCRAKATASQ.

This sequence belongs to the G-protein coupled receptor 1 family. In terms of assembly, interacts (via C-terminus) with MKLN1.

It localises to the cell membrane. In terms of biological role, receptor for prostaglandin E2 (PGE2). Required for normal development of fever in response to pyrinogens, including IL1B, prostaglandin E2 and bacterial lipopolysaccharide (LPS). Required for normal potentiation of platelet aggregation by prostaglandin E2, and thus plays a role in the regulation of blood coagulation. Required for increased HCO3(-) secretion in the duodenum in response to mucosal acidification, and thereby contributes to the protection of the mucosa against acid-induced ulceration. Not required for normal kidney function, normal urine volume and osmolality. This chain is Prostaglandin E2 receptor EP3 subtype (PTGER3), found in Ovis aries (Sheep).